The chain runs to 189 residues: Putative biopolymer transport protein ExbB-like 1 (189 aa).

The next 3 membrane-spanning stretches (helical) occupy residues Phe14–Phe34, Leu99–Val119, and Leu147–Leu167.

The protein belongs to the ExbB/TolQ family.

Its subcellular location is the cell inner membrane. The protein is Putative biopolymer transport protein ExbB-like 1 of Helicobacter pylori (strain J99 / ATCC 700824) (Campylobacter pylori J99).